Here is a 347-residue protein sequence, read N- to C-terminus: Protein-glutamate methylesterase/protein-glutamine glutaminase 1 (347 aa).

The Response regulatory domain occupies 6 to 123; it reads RVLVVDDSAT…LRPFGDLAEK (118 aa). Asp-57 is modified (4-aspartylphosphate). The CheB-type methylesterase domain occupies 150 to 342; the sequence is FRVGRKIVAI…EEILKMTAAR (193 aa). Catalysis depends on residues Ser-162, His-188, and Asp-284.

The protein belongs to the CheB family. In terms of processing, phosphorylated by CheA. Phosphorylation of the N-terminal regulatory domain activates the methylesterase activity.

It localises to the cytoplasm. The catalysed reaction is [protein]-L-glutamate 5-O-methyl ester + H2O = L-glutamyl-[protein] + methanol + H(+). The enzyme catalyses L-glutaminyl-[protein] + H2O = L-glutamyl-[protein] + NH4(+). In terms of biological role, involved in chemotaxis. Part of a chemotaxis signal transduction system that modulates chemotaxis in response to various stimuli. Catalyzes the demethylation of specific methylglutamate residues introduced into the chemoreceptors (methyl-accepting chemotaxis proteins or MCP) by CheR. Also mediates the irreversible deamidation of specific glutamine residues to glutamic acid. This is Protein-glutamate methylesterase/protein-glutamine glutaminase 1 from Rhizobium johnstonii (strain DSM 114642 / LMG 32736 / 3841) (Rhizobium leguminosarum bv. viciae).